The sequence spans 635 residues: Two-component response regulator ARR18 (635 aa).

Residues 19–133 enclose the Response regulatory domain; it reads RVLAVDDNPT…ELQNIWHHVV (115 aa). Asp70 is subject to 4-aspartylphosphate. Disordered stretches follow at residues 144 to 196 and 323 to 342; these read LPPS…KKPR and IQQG…GTYH. The segment covering 166 to 186 has biased composition (acidic residues); it reads SGDEDDSDREEDDGEGSEQDG. Residues 193-196 carry the Nuclear localization signal motif; sequence KKPR. The myb-like GARP DNA-binding region spans 196 to 246; sequence RVVWSQELHQKFVSAVQQLGLDKAVPKKILDLMSIEGLTRENVASHLQKYR.

Belongs to the ARR family. Type-B subfamily. As to quaternary structure, binds the target DNA as a monomer. Post-translationally, two-component system major event consists of a His-to-Asp phosphorelay between a sensor histidine kinase (HK) and a response regulator (RR). In plants, the His-to-Asp phosphorelay involves an additional intermediate named Histidine-containing phosphotransfer protein (HPt). This multistep phosphorelay consists of a His-Asp-His-Asp sequential transfer of a phosphate group between first a His and an Asp of the HK protein, followed by the transfer to a conserved His of the HPt protein and finally the transfer to an Asp in the receiver domain of the RR protein. Predominantly expressed in young leaf tissue developing anthers, and siliques.

It localises to the nucleus. Its function is as follows. Transcriptional activator that binds specifically to the DNA sequence 5'-[AG]GATT-3'. Functions as a response regulator involved in His-to-Asp phosphorelay signal transduction system. Phosphorylation of the Asp residue in the receiver domain activates the ability of the protein to promote the transcription of target genes. Could directly activate some type-A response regulators in response to cytokinins. In Arabidopsis thaliana (Mouse-ear cress), this protein is Two-component response regulator ARR18 (ARR18).